We begin with the raw amino-acid sequence, 576 residues long: Arginine--tRNA ligase (576 aa).

A 'HIGH' region motif is present at residues 126–136 (ANPTGPMHIGH).

The protein belongs to the class-I aminoacyl-tRNA synthetase family. Monomer.

It is found in the cytoplasm. The enzyme catalyses tRNA(Arg) + L-arginine + ATP = L-arginyl-tRNA(Arg) + AMP + diphosphate. The sequence is that of Arginine--tRNA ligase from Rickettsia rickettsii (strain Iowa).